Here is a 473-residue protein sequence, read N- to C-terminus: Trehalose-6-phosphate synthase (473 aa).

R10 contributes to the D-glucose 6-phosphate binding site. Position 21-22 (21-22 (GG)) interacts with UDP-alpha-D-glucose. Residues Y76 and D130 each contribute to the D-glucose 6-phosphate site. UDP-alpha-D-glucose-binding residues include R262 and K267. R300 is a D-glucose 6-phosphate binding site. UDP-alpha-D-glucose contacts are provided by residues F339 and 365–369 (LVAKE).

It belongs to the glycosyltransferase 20 family. As to quaternary structure, homotetramer.

The enzyme catalyses D-glucose 6-phosphate + UDP-alpha-D-glucose = alpha,alpha-trehalose 6-phosphate + UDP + H(+). The protein operates within glycan biosynthesis; trehalose biosynthesis. Functionally, probably involved in the osmoprotection via the biosynthesis of trehalose. Catalyzes the transfer of glucose from UDP-alpha-D-glucose (UDP-Glc) to D-glucose 6-phosphate (Glc-6-P) to form trehalose-6-phosphate. Acts with retention of the anomeric configuration of the UDP-sugar donor. The sequence is that of Trehalose-6-phosphate synthase from Citrobacter koseri (strain ATCC BAA-895 / CDC 4225-83 / SGSC4696).